A 716-amino-acid polypeptide reads, in one-letter code: Phenylalanine/tyrosine ammonia-lyase (716 aa).

Catalysis depends on Y110, which acts as the Proton donor/acceptor. A cross-link (5-imidazolinone (Ala-Gly)) is located at residues 211 to 213 (ASG). At S212 the chain carries 2,3-didehydroalanine (Ser). N270, Q360, R366, N397, K468, E496, and N499 together coordinate (E)-cinnamate.

It belongs to the PAL/histidase family. As to quaternary structure, homotetramer. Dimer of dimers. In terms of processing, contains an active site 4-methylidene-imidazol-5-one (MIO), which is formed autocatalytically by cyclization and dehydration of residues Ala-Ser-Gly.

The protein localises to the cytoplasm. The enzyme catalyses L-phenylalanine = (E)-cinnamate + NH4(+). The catalysed reaction is L-tyrosine = (E)-4-coumarate + NH4(+). It participates in phenylpropanoid metabolism; trans-cinnamate biosynthesis; trans-cinnamate from L-phenylalanine: step 1/1. Its function is as follows. Catalyzes the non-oxidative deamination of L-phenylalanine and L-tyrosine to form trans-cinnamic acid and p-coumaric acid respectively with similar efficiencies. Facilitates the commitment step in phenylpropanoid pathways that produce secondary metabolites such as lignins, coumarins and flavonoids. This chain is Phenylalanine/tyrosine ammonia-lyase (PAL), found in Rhodotorula toruloides (Yeast).